A 304-amino-acid polypeptide reads, in one-letter code: Probable alpha-L-glutamate ligase 2 (304 aa).

The 184-residue stretch at 107 to 290 (HQLLARKGVG…IAGAIIDYIV (184 aa)) folds into the ATP-grasp domain. Residues lysine 144, 181–182 (EF), aspartate 190, and 214–216 (RSN) each bind ATP. Positions 251, 263, and 265 each coordinate Mg(2+). Mn(2+)-binding residues include aspartate 251, glutamate 263, and asparagine 265.

This sequence belongs to the RimK family. Requires Mg(2+) as cofactor. Mn(2+) serves as cofactor.

The sequence is that of Probable alpha-L-glutamate ligase 2 from Hahella chejuensis (strain KCTC 2396).